The primary structure comprises 343 residues: Tetraacyldisaccharide 4'-kinase (343 aa).

ATP is bound at residue 58–65 (VAGGAGKT).

It belongs to the LpxK family.

The enzyme catalyses a lipid A disaccharide + ATP = a lipid IVA + ADP + H(+). The protein operates within glycolipid biosynthesis; lipid IV(A) biosynthesis; lipid IV(A) from (3R)-3-hydroxytetradecanoyl-[acyl-carrier-protein] and UDP-N-acetyl-alpha-D-glucosamine: step 6/6. Its function is as follows. Transfers the gamma-phosphate of ATP to the 4'-position of a tetraacyldisaccharide 1-phosphate intermediate (termed DS-1-P) to form tetraacyldisaccharide 1,4'-bis-phosphate (lipid IVA). The chain is Tetraacyldisaccharide 4'-kinase from Polaromonas naphthalenivorans (strain CJ2).